The following is a 213-amino-acid chain: GTP-binding protein yptV4 (213 aa).

13–21 (GDTGVGKSC) is a binding site for GTP. Residues 35 to 43 (HDLTIGVEF) carry the Effector region motif. Residues 61 to 65 (DTAGQ), 119 to 122 (NKCD), and 149 to 151 (SAR) each bind GTP. Positions 194 to 213 (AGPQAAKPGEGDARKSSSCC) are disordered. The segment covering 202–213 (GEGDARKSSSCC) has biased composition (basic and acidic residues). 2 S-geranylgeranyl cysteine lipidation sites follow: Cys212 and Cys213.

Belongs to the small GTPase superfamily. Rab family.

It localises to the cell membrane. Its function is as follows. Protein transport. Probably involved in vesicular traffic. The protein is GTP-binding protein yptV4 (YPTV4) of Volvox carteri (Green alga).